A 617-amino-acid polypeptide reads, in one-letter code: DNA double-strand break repair protein Mre11 (617 aa).

4 residues coordinate Mn(2+): D12, H14, D53, and N88. The active-site Proton donor is H89. H158, D189, and H191 together coordinate Mn(2+). Over residues 395-432 (SPVDPSSSVSSIESSGSVSPIDSVSTVSPSSPSSSAII) the composition is skewed to low complexity. Disordered regions lie at residues 395 to 437 (SPVD…EPEE) and 513 to 617 (VEDE…GDYL). Positions 529 to 547 (APQSSSPVSFSDNSQTGFS) are enriched in polar residues. The span at 549 to 559 (ISPPESIPSPE) shows a compositional bias: low complexity. Residues 560 to 583 (ILKENSEADADEKPVDGKLSEEKP) are compositionally biased toward basic and acidic residues.

The protein belongs to the MRE11/RAD32 family. Homodimer. Forms a heterotetramer composed of two Mre11 subunits and two Rad50 subunits. It depends on Mn(2+) as a cofactor.

Nuclease activity is regulated by Rad50. Its function is as follows. Part of the Rad50/Mre11 complex, which is involved in the early steps of DNA double-strand break (DSB) repair. The complex may facilitate opening of the processed DNA ends to aid in the recruitment of HerA and NurA. Mre11 binds to DSB ends and has both double-stranded 3'-5' exonuclease activity and single-stranded endonuclease activity. This chain is DNA double-strand break repair protein Mre11, found in Methanosarcina mazei (strain ATCC BAA-159 / DSM 3647 / Goe1 / Go1 / JCM 11833 / OCM 88) (Methanosarcina frisia).